We begin with the raw amino-acid sequence, 639 residues long: Tetracycline resistance protein TetM from transposon Tn5251 (639 aa).

The region spanning 1–242 (MKIINIGVLA…VITNKFYSST (242 aa)) is the tr-type G domain. GTP is bound by residues 10–17 (AHVDAGKT), 74–78 (DTPGH), and 128–131 (NKID).

The protein belongs to the TRAFAC class translation factor GTPase superfamily. Classic translation factor GTPase family. TetM/TetO subfamily.

Functionally, abolishes the inhibitory effect of tetracyclin on protein synthesis by a non-covalent modification of the ribosomes. This chain is Tetracycline resistance protein TetM from transposon Tn5251 (tetM(5251)), found in Streptococcus pneumoniae.